Reading from the N-terminus, the 211-residue chain is tRNA (guanine-N(7)-)-methyltransferase (211 aa).

Residues Glu43, Asp68, Asn95, and Asn117 each contribute to the S-adenosyl-L-methionine site. Substrate contacts are provided by residues Lys121, Asp153, and 190–193 (TEYE).

Belongs to the class I-like SAM-binding methyltransferase superfamily. TrmB family.

It catalyses the reaction guanosine(46) in tRNA + S-adenosyl-L-methionine = N(7)-methylguanosine(46) in tRNA + S-adenosyl-L-homocysteine. Its pathway is tRNA modification; N(7)-methylguanine-tRNA biosynthesis. Its function is as follows. Catalyzes the formation of N(7)-methylguanine at position 46 (m7G46) in tRNA. The sequence is that of tRNA (guanine-N(7)-)-methyltransferase from Clostridium kluyveri (strain ATCC 8527 / DSM 555 / NBRC 12016 / NCIMB 10680 / K1).